The following is a 468-amino-acid chain: 6-phospho-beta-galactosidase (468 aa).

D-galactose 6-phosphate-binding residues include glutamine 19, histidine 116, asparagine 159, glutamate 160, and asparagine 297. Glutamate 160 acts as the Proton donor in catalysis. Glutamate 375 functions as the Nucleophile in the catalytic mechanism. The D-galactose 6-phosphate site is built by serine 428, tryptophan 429, lysine 435, and tyrosine 437.

The protein belongs to the glycosyl hydrolase 1 family.

The enzyme catalyses a 6-phospho-beta-D-galactoside + H2O = D-galactose 6-phosphate + an alcohol. It participates in carbohydrate metabolism; lactose degradation; D-galactose 6-phosphate and beta-D-glucose from lactose 6-phosphate: step 1/1. This is 6-phospho-beta-galactosidase from Streptococcus pyogenes serotype M2 (strain MGAS10270).